The following is a 79-amino-acid chain: Ponericin-W-like 32.1 (79 aa).

The signal sequence occupies residues 1-23 (MKCKKQLLVIFFAYFLVVNESEA). A propeptide spanning residues 49–79 (RALMKRDLEDIMDPYQKNLKLDRYLRRLAMD) is cleaved from the precursor.

This sequence belongs to the non-disulfide-bridged peptide (NDBP) superfamily. Medium-length antimicrobial peptide (group 3) family. Ponericin-W subfamily. Expressed by the venom gland.

Its subcellular location is the secreted. The protein localises to the target cell membrane. Its function is as follows. Antimicrobial peptide with potent activity against a range of Gram-positive and Gram-negative bacteria. Has high hemolytic activity against erythrocytes. May act by disrupting the integrity of the bacterial cell membrane. This Lychas mucronatus (Chinese swimming scorpion) protein is Ponericin-W-like 32.1.